The sequence spans 281 residues: ATP phosphoribosyltransferase (281 aa).

The protein belongs to the ATP phosphoribosyltransferase family. Long subfamily. It depends on Mg(2+) as a cofactor.

Its subcellular location is the cytoplasm. It catalyses the reaction 1-(5-phospho-beta-D-ribosyl)-ATP + diphosphate = 5-phospho-alpha-D-ribose 1-diphosphate + ATP. It functions in the pathway amino-acid biosynthesis; L-histidine biosynthesis; L-histidine from 5-phospho-alpha-D-ribose 1-diphosphate: step 1/9. With respect to regulation, feedback inhibited by histidine. In terms of biological role, catalyzes the condensation of ATP and 5-phosphoribose 1-diphosphate to form N'-(5'-phosphoribosyl)-ATP (PR-ATP). Has a crucial role in the pathway because the rate of histidine biosynthesis seems to be controlled primarily by regulation of HisG enzymatic activity. This is ATP phosphoribosyltransferase from Corynebacterium jeikeium (strain K411).